The sequence spans 448 residues: RING finger protein 44 (448 aa).

An RING-type; atypical zinc finger spans residues 396–437; it reads CVVCFSDFESRQLLRVLPCNHEFHAKCVDKWLKTNRTCPICR.

The polypeptide is RING finger protein 44 (rnf44) (Danio rerio (Zebrafish)).